The primary structure comprises 352 residues: Glutamine synthetase cytosolic isozyme (352 aa).

The GS beta-grasp domain occupies 19–98 (FIAEYIWIDA…VMCDTYTPAG (80 aa)). One can recognise a GS catalytic domain in the interval 105–352 (KRCNAAKIFS…TSMIAETTIL (248 aa)).

This sequence belongs to the glutamine synthetase family. In terms of assembly, homooctamer.

It is found in the cytoplasm. It carries out the reaction L-glutamate + NH4(+) + ATP = L-glutamine + ADP + phosphate + H(+). This chain is Glutamine synthetase cytosolic isozyme (GLN1), found in Daucus carota (Wild carrot).